The primary structure comprises 92 residues: Small ribosomal subunit protein uS19 (92 aa).

The protein belongs to the universal ribosomal protein uS19 family.

Functionally, protein S19 forms a complex with S13 that binds strongly to the 16S ribosomal RNA. This chain is Small ribosomal subunit protein uS19, found in Rhizobium johnstonii (strain DSM 114642 / LMG 32736 / 3841) (Rhizobium leguminosarum bv. viciae).